Consider the following 209-residue polypeptide: Ubiquitin-conjugating enzyme E2 S (209 aa).

The region spanning 14–160 (QTIRQVMREL…ARMMTEIHAQ (147 aa)) is the UBC core domain. The active-site Glycyl thioester intermediate is cysteine 98. The tract at residues 164 to 209 (CGVGASGDAKDDDGPSTKKHAGLDKKLQDKKKEKLLKEKKRMLKRL) is disordered. The span at 171 to 199 (DAKDDDGPSTKKHAGLDKKLQDKKKEKLL) shows a compositional bias: basic and acidic residues. Residues 200–209 (KEKKRMLKRL) are compositionally biased toward basic residues.

This sequence belongs to the ubiquitin-conjugating enzyme family.

It carries out the reaction S-ubiquitinyl-[E1 ubiquitin-activating enzyme]-L-cysteine + [E2 ubiquitin-conjugating enzyme]-L-cysteine = [E1 ubiquitin-activating enzyme]-L-cysteine + S-ubiquitinyl-[E2 ubiquitin-conjugating enzyme]-L-cysteine.. Its pathway is protein modification; protein ubiquitination. In terms of biological role, catalyzes the covalent attachment of ubiquitin to other proteins. Acts as an essential factor of the anaphase promoting complex/cyclosome (APC/C), a cell cycle-regulated ubiquitin ligase that controls progression through mitosis. Acts by specifically elongating polyubiquitin chains initiated by the E2 enzyme vih/UbcH10 on APC/C substrates, enhancing the degradation of APC/C substrates by the proteasome and promoting mitotic exit. The polypeptide is Ubiquitin-conjugating enzyme E2 S (Drosophila yakuba (Fruit fly)).